The chain runs to 302 residues: Sulfate adenylyltransferase subunit 2 (302 aa).

It belongs to the PAPS reductase family. CysD subfamily. In terms of assembly, heterodimer composed of CysD, the smaller subunit, and CysN.

It catalyses the reaction sulfate + ATP + H(+) = adenosine 5'-phosphosulfate + diphosphate. The protein operates within sulfur metabolism; hydrogen sulfide biosynthesis; sulfite from sulfate: step 1/3. Functionally, with CysN forms the ATP sulfurylase (ATPS) that catalyzes the adenylation of sulfate producing adenosine 5'-phosphosulfate (APS) and diphosphate, the first enzymatic step in sulfur assimilation pathway. APS synthesis involves the formation of a high-energy phosphoric-sulfuric acid anhydride bond driven by GTP hydrolysis by CysN coupled to ATP hydrolysis by CysD. This is Sulfate adenylyltransferase subunit 2 from Escherichia coli O1:K1 / APEC.